The chain runs to 228 residues: CD302 antigen (228 aa).

The signal sequence occupies residues 1 to 20; sequence MPHAALSSLVLLSLATAIVA. The Extracellular portion of the chain corresponds to 21–165; it reads DCPSSTWVQF…YDKKYLSDNH (145 aa). One can recognise a C-type lectin domain in the interval 30–149; the sequence is FQGSCYAFLQ…CEISSVEGTL (120 aa). N-linked (GlcNAc...) asparagine glycosylation is present at Asn107. Cys125 and Cys140 are oxidised to a cystine. Residues 166 to 186 form a helical membrane-spanning segment; it reads ILISTLVIASTVTLAVLGAII. Residues 187–228 lie on the Cytoplasmic side of the membrane; it reads WFLYRRNARSGFTSFSPAPLSPYSDGCALVVAEEDEYAVQLD.

It is found in the membrane. It localises to the cell projection. The protein localises to the filopodium. Its subcellular location is the cytoplasm. The protein resides in the cell cortex. It is found in the microvillus. Its function is as follows. Potential multifunctional C-type lectin receptor that may play roles in endocytosis and phagocytosis as well as in cell adhesion and migration. This is CD302 antigen (Cd302) from Mus musculus (Mouse).